We begin with the raw amino-acid sequence, 243 residues long: UPF0758 protein Ava_0172 (243 aa).

Residues 113-235 (PIDSPVAAVA…HQSLREVTTL (123 aa)) enclose the MPN domain. 3 residues coordinate Zn(2+): His184, His186, and Asp197. A JAMM motif motif is present at residues 184 to 197 (HNHPSGNVEPSPED).

This sequence belongs to the UPF0758 family.

This Trichormus variabilis (strain ATCC 29413 / PCC 7937) (Anabaena variabilis) protein is UPF0758 protein Ava_0172.